A 106-amino-acid chain; its full sequence is Glutaredoxin-1 (106 aa).

Ala-2 is subject to N-acetylalanine. In terms of domain architecture, Glutaredoxin spans 3-106 (QAFVNSKIQP…TRLKQMGALQ (104 aa)). The residue at position 9 (Lys-9) is an N6-succinyllysine. 2 cysteine pairs are disulfide-bonded: Cys-23–Cys-26 and Cys-79–Cys-83.

The protein belongs to the glutaredoxin family.

It is found in the cytoplasm. Has a glutathione-disulfide oxidoreductase activity in the presence of NADPH and glutathione reductase. Reduces low molecular weight disulfides and proteins. The protein is Glutaredoxin-1 (GLRX) of Bos taurus (Bovine).